Here is a 216-residue protein sequence, read N- to C-terminus: Adenylate kinase (216 aa).

11–16 (GSGKGT) contacts ATP. Residues 31–60 (ATGDLFRKAIECGDELGDTVKSYMERGELV) are NMP. AMP is bound by residues Thr32, Arg37, 58-60 (ELV), 86-89 (GFPR), and Gln93. Positions 127–163 (GRWVCRSCQSPYQSGCAEVTKGKCSRCQGELYQRPDD) are LID. Arg128 is a binding site for ATP. Positions 131, 134, 150, and 153 each coordinate Zn(2+). 2 residues coordinate AMP: Arg160 and Arg171. Ala199 is a binding site for ATP.

Belongs to the adenylate kinase family. In terms of assembly, monomer.

The protein localises to the cytoplasm. It catalyses the reaction AMP + ATP = 2 ADP. Its pathway is purine metabolism; AMP biosynthesis via salvage pathway; AMP from ADP: step 1/1. Catalyzes the reversible transfer of the terminal phosphate group between ATP and AMP. Plays an important role in cellular energy homeostasis and in adenine nucleotide metabolism. This is Adenylate kinase from Dehalococcoides mccartyi (strain ATCC BAA-2100 / JCM 16839 / KCTC 5957 / BAV1).